Consider the following 63-residue polypeptide: Protein CYSTEINE-RICH TRANSMEMBRANE MODULE 12 (63 aa).

The disordered stretch occupies residues 1-34 (MQDMRDQNPPQGYPAAEQVSEQPGQDKKKKKPRF). A helical transmembrane segment spans residues 40 to 56 (KGDRGFIEGCLFALCCC).

It belongs to the CYSTM1 family. Homodimer and heterodimers. Binds weakly to CYSTM4, CYSTM6 and CYSTM7. Mostly expressed in roots, flowers and siliques and, to a lower extent, in stems and leaves.

It localises to the cell membrane. Its subcellular location is the cytoplasm. Involved in resistance to abiotic stress. In Arabidopsis thaliana (Mouse-ear cress), this protein is Protein CYSTEINE-RICH TRANSMEMBRANE MODULE 12.